A 525-amino-acid chain; its full sequence is Ubiquitin carboxyl-terminal hydrolase 22 (525 aa).

The segment at 21–138 (PGCSHLGSFK…KEEQRKAWKM (118 aa)) adopts a UBP-type zinc-finger fold. Residues Cys-23, His-25, Cys-63, Cys-66, Cys-76, Cys-79, Cys-84, His-89, His-93, His-99, Cys-112, and Cys-115 each coordinate Zn(2+). An N6-acetyllysine modification is found at Lys-129. Thr-147 is modified (phosphothreonine; by CDK1). In terms of domain architecture, USP spans 176-520 (RGLINLGNTC…EGYLLFYHKQ (345 aa)). The Nucleophile role is filled by Cys-185. At Ser-237 the chain carries Phosphoserine; by CDK1. The Proton acceptor role is filled by His-479.

Belongs to the peptidase C19 family. UBP8 subfamily. In terms of assembly, component of some SAGA transcription coactivator-HAT complexes, at least composed of ATXN7, ATXN7L3, ENY2, GCN5L2, SUPT3H, TAF10, TRRAP and USP22. Within the SAGA complex, ATXN7L3, ENY2 and USP22 form a subcomplex required for histone deubiquitination. Interacts directly with ATXN7L3; leading to its recruitment to the SAGA complex. Interacts with ATXN7L3 and weakly with ATXN7L3B. Interacts with MED1. Phosphorylated in G2/M phase, but not in G1 phase by CDK1. In terms of processing, ubiquitinated and subsequently degraded in a CDC20-dependent manner. Moderately expressed in various tissues including heart and skeletal muscle, and weakly expressed in lung and liver.

It is found in the nucleus. It localises to the cytoplasm. The catalysed reaction is Thiol-dependent hydrolysis of ester, thioester, amide, peptide and isopeptide bonds formed by the C-terminal Gly of ubiquitin (a 76-residue protein attached to proteins as an intracellular targeting signal).. Deubiquitinase that plays a role in several cellular processes including transcriptional regulation, cell cycle progression or innate immunity. As part of the transcription regulatory histone acetylation (HAT) complex SAGA, catalyzes the deubiquitination of both histones H2A and H2B, thereby acting as a transcriptional coactivator. Recruited to specific gene promoters by activators such as MYC, where it is required for transcription. Facilitates cell-cycle progression by stabilizing CCNB1 and antagonizing its proteasome-mediated degradation in a cell cycle-specific manner. Modulates cell cycle progression and apoptosis also by antagonizing TP53 transcriptional activation through deacetylase SIRT1 stabilization. Plays multiple roles in immunity and inflammation. Participates in antiviral response by deubiquitinating the importin KPNA2, leading to IRF3 nuclear translocation and subsequent type I interferon production. Acts as a central regulator of type III IFN signaling by negatively regulating STING1 activation and ubiquitination. Inhibits NLRP3 inflammasome activation by promoting NLRP3 degradation through ATG5-dependent autophagy. Deubiquitinates CD274 to induce its stabilization and thereby participates in maintenance of immune tolerance to self. Controls necroptotic cell death by regulating RIPK3 phosphorylation and ubiquitination. During bacterial infection, promotes pro-inflammatory response by targeting TRAF6 and removing its 'Lys-48'-linked polyubiquitination. In Homo sapiens (Human), this protein is Ubiquitin carboxyl-terminal hydrolase 22 (USP22).